A 419-amino-acid polypeptide reads, in one-letter code: Potassium/proton antiporter CemA (419 aa).

4 helical membrane passes run 196-216 (LASI…TLLF), 297-317 (IIEL…LCIA), 344-364 (ILLI…EVLI), and 371-391 (FGFV…PVVL).

The protein belongs to the CemA family.

Its subcellular location is the plastid. It localises to the chloroplast inner membrane. The enzyme catalyses K(+)(in) + H(+)(out) = K(+)(out) + H(+)(in). Contributes to K(+)/H(+) antiport activity by supporting proton efflux to control proton extrusion and homeostasis in chloroplasts in a light-dependent manner to modulate photosynthesis. Prevents excessive induction of non-photochemical quenching (NPQ) under continuous-light conditions. Indirectly promotes efficient inorganic carbon uptake into chloroplasts. The sequence is that of Potassium/proton antiporter CemA from Chara vulgaris (Common stonewort).